Consider the following 136-residue polypeptide: Heavy metal-associated isoprenylated plant protein 19 (136 aa).

Positions 13-77 (YMDVEFNVSM…LKKKTGKRVK (65 aa)) constitute an HMA domain. A metal cation-binding residues include Cys-24 and Cys-27. Cys-133 is subject to Cysteine methyl ester. Cys-133 carries S-farnesyl cysteine lipidation. The propeptide at 134–136 (SIS) is removed in mature form.

It belongs to the HIPP family.

Functionally, heavy-metal-binding protein. The sequence is that of Heavy metal-associated isoprenylated plant protein 19 from Arabidopsis thaliana (Mouse-ear cress).